The following is a 231-amino-acid chain: Small ribosomal subunit protein uS3 (231 aa).

One can recognise a KH type-2 domain in the interval 39-107; sequence IRELLHKELK…DVVINIVEIR (69 aa).

This sequence belongs to the universal ribosomal protein uS3 family. Part of the 30S ribosomal subunit. Forms a tight complex with proteins S10 and S14.

In terms of biological role, binds the lower part of the 30S subunit head. Binds mRNA in the 70S ribosome, positioning it for translation. This Nitrobacter hamburgensis (strain DSM 10229 / NCIMB 13809 / X14) protein is Small ribosomal subunit protein uS3.